Reading from the N-terminus, the 180-residue chain is Required for excision 1-B domain-containing protein (180 aa).

Positions 1 to 23 are disordered; that stretch reads MITAEAASESTVPAVPGDTAATG.

This Bos taurus (Bovine) protein is Required for excision 1-B domain-containing protein.